The following is a 211-amino-acid chain: Uracil phosphoribosyltransferase (211 aa).

30 to 34 (KGLVR) is a GTP binding site. Residues arginine 79, arginine 104, and 133–141 (DPMLATGIT) each bind 5-phospho-alpha-D-ribose 1-diphosphate. Uracil is bound by residues isoleucine 197 and 202–204 (GDA). Position 203 (aspartate 203) interacts with 5-phospho-alpha-D-ribose 1-diphosphate.

It belongs to the UPRTase family. The cofactor is Mg(2+).

It carries out the reaction UMP + diphosphate = 5-phospho-alpha-D-ribose 1-diphosphate + uracil. Its pathway is pyrimidine metabolism; UMP biosynthesis via salvage pathway; UMP from uracil: step 1/1. Its activity is regulated as follows. Allosterically activated by GTP. Catalyzes the conversion of uracil and 5-phospho-alpha-D-ribose 1-diphosphate (PRPP) to UMP and diphosphate. This is Uracil phosphoribosyltransferase from Pyrobaculum islandicum (strain DSM 4184 / JCM 9189 / GEO3).